A 161-amino-acid polypeptide reads, in one-letter code: Regulator of ribonuclease activity A (161 aa).

The protein belongs to the RraA family. In terms of assembly, homotrimer. Binds to both RNA-binding sites in the C-terminal region of Rne and to RhlB.

Its subcellular location is the cytoplasm. In terms of biological role, globally modulates RNA abundance by binding to RNase E (Rne) and regulating its endonucleolytic activity. Can modulate Rne action in a substrate-dependent manner by altering the composition of the degradosome. Modulates RNA-binding and helicase activities of the degradosome. The sequence is that of Regulator of ribonuclease activity A from Shewanella oneidensis (strain ATCC 700550 / JCM 31522 / CIP 106686 / LMG 19005 / NCIMB 14063 / MR-1).